Here is a 496-residue protein sequence, read N- to C-terminus: Mothers against decapentaplegic homolog 6 (496 aa).

The segment covering 1-15 (MFRSKRSGLVRRLWR) has biased composition (basic residues). Disordered regions lie at residues 1–116 (MFRS…PGWL) and 136–156 (GAPRDASDPLAGAALEPAGGG). Dimethylated arginine; alternate occurs at positions 75 and 82. Omega-N-methylarginine; alternate occurs at positions 75 and 82. Residues 148 to 275 (AALEPAGGGR…FSRLCGPESP (128 aa)) enclose the MH1 domain. Residue lysine 173 forms a Glycyl lysine isopeptide (Lys-Gly) (interchain with G-Cter in ubiquitin) linkage. Zn(2+)-binding residues include cysteine 205, cysteine 247, cysteine 260, and histidine 265. Residues 331 to 496 (WCSVAYWEHR…WLEILLNNPR (166 aa)) form the MH2 domain. The residue at position 435 (serine 435) is a Phosphoserine; by PRKX; in vitro.

The protein belongs to the dwarfin/SMAD family. Interacts with NEDD4L. Interacts with WWP1. Interacts with STAMBP and PRKX. Interacts with RNF111 and AXIN1. Interacts with TGF-beta type I receptor superfamily members, including ACVR1B, BMPR1B and TGFBR1. In response to BMP2, but not to TGFB treatment, interacts with SMAD1, but not with SMAD2, nor with SMAD4; this interaction may inhibit SMAD1 binding to SMAD4. Interacts with HOXC8 and HOXC9. Interacts with PELI1; this interaction interferes with PELI1 complex formation with TRAF6, IRAK1, IRAK4 and MYD88 in response to IL1B and hence negatively regulates IL1R-TLR signaling. Interacts with TSC22D1/TSC-22. Post-translationally, phosphorylated by BMP type 1 receptor kinase and by PRKX. In terms of processing, monoubiquitinated at Lys-173 by the E2/E3 hybrid ubiquitin-protein ligase UBE2O, leading to reduced binding affinity for the activated BMP type I receptor ACVR1/ALK2, thereby enhancing BMP7 and regulating adipocyte differentiation. Ubiquitinated by WWP1. Ubiquitinated by ARK2C, promoting proteasomal degradation, leading to enhance the BMP-Smad signaling. Arginine methylation by PRMT1, which is recruited by BMPR2, initiates BMP-Induced signaling and induces dissociation from the BMPR1B receptor at the cell surface leading to derepress downstream Smad1/Smad5 signaling. As to expression, expressed in the brain, heart, ovary, peripheral blood leukocytes, small intestine, spleen, thymus, bone marrow, fetal liver and lymph nodes.

It localises to the nucleus. Transforming growth factor-beta superfamily receptors signaling occurs through the Smad family of intracellular mediators. SMAD6 is an inhibitory Smad (i-Smad) that negatively regulates signaling downstream of type I transforming growth factor-beta. Acts as a mediator of TGF-beta and BMP anti-inflammatory activities. Suppresses IL1R-TLR signaling through its direct interaction with PEL1, preventing NF-kappa-B activation, nuclear transport and NF-kappa-B-mediated expression of pro-inflammatory genes. Blocks the BMP-SMAD1 signaling pathway by competing with SMAD4 for receptor-activated SMAD1-binding. Binds to regulatory elements in target promoter regions. The polypeptide is Mothers against decapentaplegic homolog 6 (SMAD6) (Homo sapiens (Human)).